The sequence spans 167 residues: 18.8 kDa class II heat shock protein (167 aa).

In terms of domain architecture, sHSP spans 49-167; it reads DAKAMAATPA…KPKTVEVKVA (119 aa).

This sequence belongs to the small heat shock protein (HSP20) family.

It localises to the cytoplasm. The chain is 18.8 kDa class II heat shock protein (SHSP-2) from Ipomoea nil (Japanese morning glory).